Here is a 584-residue protein sequence, read N- to C-terminus: Proteasome-associated ATPase (584 aa).

A coiled-coil region spans residues 8-90 (RHAERDRDEL…KEEVDRLSQP (83 aa)). Residue 272-277 (GCGKTL) coordinates ATP. The segment at 583–584 (YL) is docks into pockets in the proteasome alpha-ring.

The protein belongs to the AAA ATPase family. Homohexamer. Assembles into a hexameric ring structure that caps the 20S proteasome core. Strongly interacts with the prokaryotic ubiquitin-like protein Pup through a hydrophobic interface; the interacting region of ARC lies in its N-terminal coiled-coil domain. There is one Pup binding site per ARC hexamer ring. Upon ATP-binding, the C-terminus of ARC interacts with the alpha-rings of the proteasome core, possibly by binding to the intersubunit pockets.

The protein operates within protein degradation; proteasomal Pup-dependent pathway. ATPase which is responsible for recognizing, binding, unfolding and translocation of pupylated proteins into the bacterial 20S proteasome core particle. May be essential for opening the gate of the 20S proteasome via an interaction with its C-terminus, thereby allowing substrate entry and access to the site of proteolysis. Thus, the C-termini of the proteasomal ATPase may function like a 'key in a lock' to induce gate opening and therefore regulate proteolysis. The chain is Proteasome-associated ATPase from Thermobifida fusca (strain YX).